A 239-amino-acid polypeptide reads, in one-letter code: Large ribosomal subunit protein uL1 (239 aa).

Belongs to the universal ribosomal protein uL1 family. In terms of assembly, part of the 50S ribosomal subunit.

Functionally, binds directly to 23S rRNA. The L1 stalk is quite mobile in the ribosome, and is involved in E site tRNA release. Protein L1 is also a translational repressor protein, it controls the translation of the L11 operon by binding to its mRNA. The protein is Large ribosomal subunit protein uL1 of Rickettsia conorii (strain ATCC VR-613 / Malish 7).